Reading from the N-terminus, the 250-residue chain is ATP synthase subunit a (250 aa).

6 helical membrane passes run 26-46 (FTNA…FLYL), 84-104 (FFPM…LGMV), 114-134 (IIVT…YGFY), 143-163 (LFVP…IEII), 193-213 (FVAS…LPLI), and 216-236 (VALT…FAVL).

Belongs to the ATPase A chain family. In terms of assembly, F-type ATPases have 2 components, CF(1) - the catalytic core - and CF(0) - the membrane proton channel. CF(1) has five subunits: alpha(3), beta(3), gamma(1), delta(1), epsilon(1). CF(0) has three main subunits: a(1), b(2) and c(9-12). The alpha and beta chains form an alternating ring which encloses part of the gamma chain. CF(1) is attached to CF(0) by a central stalk formed by the gamma and epsilon chains, while a peripheral stalk is formed by the delta and b chains.

Its subcellular location is the cell inner membrane. Its function is as follows. Key component of the proton channel; it plays a direct role in the translocation of protons across the membrane. The polypeptide is ATP synthase subunit a (Rhizobium meliloti (strain 1021) (Ensifer meliloti)).